A 155-amino-acid chain; its full sequence is Large ribosomal subunit protein uL15 (155 aa).

The span at 1–13 (MKLNELRDAEGAT) shows a compositional bias: basic and acidic residues. The tract at residues 1-41 (MKLNELRDAEGATKARKRVGRGIGSGSGKTGGRGVKGQKSR) is disordered. The segment covering 21–35 (RGIGSGSGKTGGRGV) has biased composition (gly residues).

Belongs to the universal ribosomal protein uL15 family. As to quaternary structure, part of the 50S ribosomal subunit.

Functionally, binds to the 23S rRNA. In Chelativorans sp. (strain BNC1), this protein is Large ribosomal subunit protein uL15.